We begin with the raw amino-acid sequence, 312 residues long: Heterotepalin-4 (312 aa).

Residues 1–22 (MKSMLVVTISVWLILAPTSTWA) form the signal peptide. 2 disulfide bridges follow: Cys-56/Cys-280 and Cys-107/Cys-128. Residue Glu-197 is part of the active site. The propeptide occupies 284–312 (YNQNAMFPQLIMSTYYNYMANLGDLFEEF).

It carries out the reaction Endohydrolysis of the N-glycosidic bond at one specific adenosine on the 28S rRNA.. In terms of biological role, inhibits protein synthesis in vitro. The sequence is that of Heterotepalin-4 from Phytolacca heterotepala (Mexican pokeweed).